The sequence spans 362 residues: 5'-tyrosyl-DNA phosphodiesterase (362 aa).

Over residues 1-10 (MSNSDDEIQE) the composition is skewed to acidic residues. The segment at 1-43 (MSNSDDEIQEIEAKRQKMSQEDSEVEIEILDEPEQGKLKNSSM) is disordered. Basic and acidic residues predominate over residues 11 to 20 (IEAKRQKMSQ). Residues 21–33 (EDSEVEIEILDEP) show a composition bias toward acidic residues. Residues 126–130 (NIDGL) are interaction with 5' end of substrate DNA. Mg(2+) is bound by residues Asp-128 and Glu-158. The segment at 232 to 237 (HLESTR) is interaction with 5' end of substrate DNA. Asp-271 functions as the Proton donor/acceptor in the catalytic mechanism. Residues 273–275 (NLR) are interaction with 5' end of substrate DNA.

Belongs to the CCR4/nocturin family. TTRAP/TDP2 subfamily. Interacts with mxl-1; the interaction promotes axon regeneration after injury. Interacts with ets-4; the interaction is required for the sumoylation of ets-4. Mg(2+) serves as cofactor. Requires Mn(2+) as cofactor.

The protein localises to the nucleus. It localises to the PML body. DNA repair enzyme that can remove a variety of covalent adducts from DNA through hydrolysis of a 5'-phosphodiester bond, giving rise to DNA with a free 5' phosphate. Catalyzes the hydrolysis of dead-end complexes between DNA and the topoisomerase 2 (top2) active site tyrosine residue. Hydrolyzes 5'-phosphoglycolates on protruding 5' ends on DNA double-strand breaks (DSBs) due to DNA damage by radiation and free radicals. Inhibits axon regeneration after neuronal injury by promoting the sumoylation of ets-4, thereby inhibiting the phosphorylation of ets-4 required for probable interaction with cebp-1 and activation of svh-2 expression. In Caenorhabditis elegans, this protein is 5'-tyrosyl-DNA phosphodiesterase.